A 513-amino-acid polypeptide reads, in one-letter code: ATP synthase subunit alpha (513 aa).

169–176 (GDRQTGKT) is an ATP binding site.

The protein belongs to the ATPase alpha/beta chains family. F-type ATPases have 2 components, CF(1) - the catalytic core - and CF(0) - the membrane proton channel. CF(1) has five subunits: alpha(3), beta(3), gamma(1), delta(1), epsilon(1). CF(0) has three main subunits: a(1), b(2) and c(9-12). The alpha and beta chains form an alternating ring which encloses part of the gamma chain. CF(1) is attached to CF(0) by a central stalk formed by the gamma and epsilon chains, while a peripheral stalk is formed by the delta and b chains.

It is found in the cell inner membrane. It catalyses the reaction ATP + H2O + 4 H(+)(in) = ADP + phosphate + 5 H(+)(out). Its function is as follows. Produces ATP from ADP in the presence of a proton gradient across the membrane. The alpha chain is a regulatory subunit. This chain is ATP synthase subunit alpha, found in Halorhodospira halophila (strain DSM 244 / SL1) (Ectothiorhodospira halophila (strain DSM 244 / SL1)).